The sequence spans 287 residues: ATP synthase gamma chain (287 aa).

Belongs to the ATPase gamma chain family. F-type ATPases have 2 components, CF(1) - the catalytic core - and CF(0) - the membrane proton channel. CF(1) has five subunits: alpha(3), beta(3), gamma(1), delta(1), epsilon(1). CF(0) has three main subunits: a, b and c.

It localises to the cell inner membrane. Functionally, produces ATP from ADP in the presence of a proton gradient across the membrane. The gamma chain is believed to be important in regulating ATPase activity and the flow of protons through the CF(0) complex. The protein is ATP synthase gamma chain of Marinobacter nauticus (strain ATCC 700491 / DSM 11845 / VT8) (Marinobacter aquaeolei).